A 146-amino-acid chain; its full sequence is Transcriptional regulator MraZ (146 aa).

SpoVT-AbrB domains follow at residues 9 to 55 (TSAL…PRPV) and 81 to 124 (AMDV…DAQR).

This sequence belongs to the MraZ family. In terms of assembly, forms oligomers.

Its subcellular location is the cytoplasm. It localises to the nucleoid. This Leptothrix cholodnii (strain ATCC 51168 / LMG 8142 / SP-6) (Leptothrix discophora (strain SP-6)) protein is Transcriptional regulator MraZ.